Consider the following 513-residue polypeptide: Beta-glucosidase 5 (513 aa).

A signal peptide spans 1–26 (MAAAIAVVYLSLLLLLLHGAAPAVLG). Gln-46 contacts a beta-D-glucoside. Residue Glu-192 is the Proton donor of the active site. Cys-211 and Cys-220 are joined by a disulfide. Residues Asn-224 and Asn-273 are each glycosylated (N-linked (GlcNAc...) asparagine). Tyr-336 and Glu-405 together coordinate a beta-D-glucoside. Glu-405 serves as the catalytic Nucleophile. An N-linked (GlcNAc...) asparagine glycan is attached at Asn-412. A beta-D-glucoside contacts are provided by residues Trp-447, 454–455 (EY), and Tyr-463.

It belongs to the glycosyl hydrolase 1 family.

The catalysed reaction is Hydrolysis of terminal, non-reducing beta-D-glucosyl residues with release of beta-D-glucose.. The chain is Beta-glucosidase 5 (BGLU5) from Oryza sativa subsp. japonica (Rice).